Consider the following 352-residue polypeptide: Ubiquitin thioesterase otulin (352 aa).

Residues 1 to 49 form a disordered region; that stretch reads MSRGTMPQPGAWPGASCAETPAREAGAAARDGGKVTAGAQPRAATRCPA. Positions 18 to 30 are enriched in low complexity; that stretch reads AETPAREAGAAAR. Residues 49 to 73 are a coiled coil; sequence AEHEEDMYRAADEIEKEKELLIHER. The PIM motif motif lies at 52 to 57; the sequence is EEDMYR. Tyrosine 56 carries the post-translational modification Phosphotyrosine. Linear diubiquitin binding stretches follow at residues 95 to 96 and 124 to 126; these read EW and RGD. Residues 118 to 346 form the OTU domain; sequence TSIRRVRGDN…DRHYNIPVRV (229 aa). Aspartate 126 is a catalytic residue. The Nucleophile role is filled by cysteine 129. Linear diubiquitin binding stretches follow at residues 255–259, 283–289, and 336–338; these read FFSVL, TGGLEQV, and DDR. Residue histidine 339 is part of the active site. The short motif at 349–352 is the PDZ-binding element; that stretch reads ETSV.

This sequence belongs to the peptidase C65 family. Otulin subfamily. In terms of assembly, interacts (via the PUB domain) with RNF31 (via the PIM motif); the interaction is direct. Interacts with DVL2. In terms of processing, ubiquitinated. Post-translationally, acetylated. Phosphorylated. Phosphorylation at Tyr-56 prevents interaction with RNF31; dephosphorylation promotes interaction with RNF31 and the LUBAC complex.

The protein localises to the cytoplasm. It carries out the reaction Thiol-dependent hydrolysis of ester, thioester, amide, peptide and isopeptide bonds formed by the C-terminal Gly of ubiquitin (a 76-residue protein attached to proteins as an intracellular targeting signal).. In terms of biological role, deubiquitinase that specifically removes linear ('Met-1'-linked) polyubiquitin chains to substrates and acts as a regulator of angiogenesis and innate immune response. Required during angiogenesis, craniofacial and neuronal development by regulating the canonical Wnt signaling together with the LUBAC complex. Acts as a negative regulator of NF-kappa-B by regulating the activity of the LUBAC complex. OTULIN function is mainly restricted to homeostasis of the LUBAC complex: acts by removing 'Met-1'-linked autoubiquitination of the LUBAC complex, thereby preventing inactivation of the LUBAC complex. Acts as a key negative regulator of inflammation by restricting spontaneous inflammation and maintaining immune homeostasis. In myeloid cell, required to prevent unwarranted secretion of cytokines leading to inflammation and autoimmunity by restricting linear polyubiquitin formation. Plays a role in innate immune response by restricting linear polyubiquitin formation on LUBAC complex in response to NOD2 stimulation, probably to limit NOD2-dependent pro-inflammatory signaling. The sequence is that of Ubiquitin thioesterase otulin from Mus musculus (Mouse).